The chain runs to 353 residues: MGSLYSEYLNPNKVQEHYNYTKETLETQETTSRQVASAFIVILCCAIVVENLLVLIAVARNSKFHSAMYLFLGNLAASDLLAGVAFVANTLLSGSVTLRLTPVQWFAREGSAFITLSASVFSLLAIAIERHVAIAKVKLYGSDKSCRMLLLIGASWLISLVLGGLPILGWNCLGHLEACSTVLPLYAKHYVLCVVTIFSIILLAIVALYVRIYCVVRSSHADMAAPQTLALLKTVTIVLGVFIVCWLPAFSILLLDYACPVHSCPILYKAHYFFAVSTLNSLLNPVIYTWRSRDLRREVLRPLQCWRPGVGVQGRRRGGTPGHHLLPLRSSSSLERGMHMPTSPTFLEGNTVV.

Residues 1–34 (MGSLYSEYLNPNKVQEHYNYTKETLETQETTSRQ) are Extracellular-facing. N-linked (GlcNAc...) asparagine glycosylation is present at N19. The helical transmembrane segment at 35 to 59 (VASAFIVILCCAIVVENLLVLIAVA) threads the bilayer. At 60 to 66 (RNSKFHS) the chain is on the cytoplasmic side. Residues 67 to 95 (AMYLFLGNLAASDLLAGVAFVANTLLSGS) form a helical membrane-spanning segment. Over 96-109 (VTLRLTPVQWFARE) the chain is Extracellular. A helical membrane pass occupies residues 110–128 (GSAFITLSASVFSLLAIAI). Topologically, residues 129–147 (ERHVAIAKVKLYGSDKSCR) are cytoplasmic. A helical transmembrane segment spans residues 148–173 (MLLLIGASWLISLVLGGLPILGWNCL). Residues 174-189 (GHLEACSTVLPLYAKH) are Extracellular-facing. Residues 190–210 (YVLCVVTIFSIILLAIVALYV) form a helical membrane-spanning segment. Over 211–233 (RIYCVVRSSHADMAAPQTLALLK) the chain is Cytoplasmic. The helical transmembrane segment at 234 to 255 (TVTIVLGVFIVCWLPAFSILLL) threads the bilayer. Residues 256–271 (DYACPVHSCPILYKAH) lie on the Extracellular side of the membrane. Residues 272-292 (YFFAVSTLNSLLNPVIYTWRS) traverse the membrane as a helical segment. Residues 293–353 (RDLRREVLRP…PTFLEGNTVV (61 aa)) lie on the Cytoplasmic side of the membrane. The S-palmitoyl cysteine moiety is linked to residue C305.

It belongs to the G-protein coupled receptor 1 family.

The protein localises to the cell membrane. Receptor for the lysosphingolipid sphingosine 1-phosphate (S1P). S1P is a bioactive lysophospholipid that elicits diverse physiological effects on most types of cells and tissues. When expressed in rat HTC4 hepatoma cells, is capable of mediating S1P-induced cell proliferation and suppression of apoptosis. Receptor for the chemokine-like protein FAM19A5. Mediates the inhibitory effect of FAM19A5 on vascular smooth muscle cell proliferation and migration. In lymphoid follicles, couples the binding of S1P to the activation of GNA13 and downstream inhibition of AKT activation leading to suppression of germinal center (GC) B cell growth and migration outside the GC niche. The chain is Sphingosine 1-phosphate receptor 2 (S1PR2) from Homo sapiens (Human).